The primary structure comprises 238 residues: UDP-2,3-diacylglucosamine hydrolase (238 aa).

5 residues coordinate Mn(2+): Asp-8, His-10, Asp-41, Asn-78, and His-113. 78–79 (NR) lines the substrate pocket. The substrate site is built by Asp-121, Ser-159, Asn-163, Lys-166, and His-194. Mn(2+) is bound by residues His-194 and His-196.

The protein belongs to the LpxH family. It depends on Mn(2+) as a cofactor.

Its subcellular location is the cell inner membrane. It carries out the reaction UDP-2-N,3-O-bis[(3R)-3-hydroxytetradecanoyl]-alpha-D-glucosamine + H2O = 2-N,3-O-bis[(3R)-3-hydroxytetradecanoyl]-alpha-D-glucosaminyl 1-phosphate + UMP + 2 H(+). It functions in the pathway glycolipid biosynthesis; lipid IV(A) biosynthesis; lipid IV(A) from (3R)-3-hydroxytetradecanoyl-[acyl-carrier-protein] and UDP-N-acetyl-alpha-D-glucosamine: step 4/6. Its function is as follows. Hydrolyzes the pyrophosphate bond of UDP-2,3-diacylglucosamine to yield 2,3-diacylglucosamine 1-phosphate (lipid X) and UMP by catalyzing the attack of water at the alpha-P atom. Involved in the biosynthesis of lipid A, a phosphorylated glycolipid that anchors the lipopolysaccharide to the outer membrane of the cell. The sequence is that of UDP-2,3-diacylglucosamine hydrolase from Shewanella pealeana (strain ATCC 700345 / ANG-SQ1).